The chain runs to 169 residues: Endoribonuclease YbeY (169 aa).

The disordered stretch occupies residues 72 to 95 (GPVAAPRQEPDSPPACRKDSSHAE). Positions 131, 135, and 141 each coordinate Zn(2+).

Belongs to the endoribonuclease YbeY family. Requires Zn(2+) as cofactor.

The protein localises to the cytoplasm. Its function is as follows. Single strand-specific metallo-endoribonuclease involved in late-stage 70S ribosome quality control and in maturation of the 3' terminus of the 16S rRNA. This chain is Endoribonuclease YbeY, found in Oleidesulfovibrio alaskensis (strain ATCC BAA-1058 / DSM 17464 / G20) (Desulfovibrio alaskensis).